We begin with the raw amino-acid sequence, 744 residues long: Polyribonucleotide nucleotidyltransferase (744 aa).

The Mg(2+) site is built by D487 and D493. The KH domain maps to 554 to 613 (PSTTTLKVDKDKIRDIIGPGGKVIKEICETSGAKIDISDDGTVSIYASDKDKLKVALDKV). The region spanning 623 to 691 (GEVFNGTVMK…NKGKAKLTIK (69 aa)) is the S1 motif domain. Positions 691-744 (KNAEKDKSSANPKPKNSPKEHQEPEKRDNGKKRAWNEDNNAETTEVVTERKYFS) are disordered. A compositionally biased stretch (basic and acidic residues) spans 707–718 (SPKEHQEPEKRD). Residues 727–736 (EDNNAETTEV) show a composition bias toward polar residues.

This sequence belongs to the polyribonucleotide nucleotidyltransferase family. It depends on Mg(2+) as a cofactor.

The protein resides in the cytoplasm. It carries out the reaction RNA(n+1) + phosphate = RNA(n) + a ribonucleoside 5'-diphosphate. In terms of biological role, involved in mRNA degradation. Catalyzes the phosphorolysis of single-stranded polyribonucleotides processively in the 3'- to 5'-direction. In Rickettsia bellii (strain OSU 85-389), this protein is Polyribonucleotide nucleotidyltransferase.